A 389-amino-acid chain; its full sequence is S-adenosylmethionine synthase (389 aa).

An ATP-binding site is contributed by His-15. Asp-17 is a Mg(2+) binding site. Residue Glu-43 coordinates K(+). L-methionine-binding residues include Glu-56 and Gln-99. The segment at 99-109 (QSPDIAQGVNE) is flexible loop. Residues 166 to 168 (DAK), 234 to 235 (RF), Asp-243, 249 to 250 (RK), Ala-266, and Lys-270 contribute to the ATP site. An L-methionine-binding site is contributed by Asp-243. Lys-274 contacts L-methionine.

This sequence belongs to the AdoMet synthase family. In terms of assembly, homotetramer; dimer of dimers. The cofactor is Mg(2+). Requires K(+) as cofactor.

It localises to the cytoplasm. It catalyses the reaction L-methionine + ATP + H2O = S-adenosyl-L-methionine + phosphate + diphosphate. The protein operates within amino-acid biosynthesis; S-adenosyl-L-methionine biosynthesis; S-adenosyl-L-methionine from L-methionine: step 1/1. Functionally, catalyzes the formation of S-adenosylmethionine (AdoMet) from methionine and ATP. The overall synthetic reaction is composed of two sequential steps, AdoMet formation and the subsequent tripolyphosphate hydrolysis which occurs prior to release of AdoMet from the enzyme. The sequence is that of S-adenosylmethionine synthase from Neisseria meningitidis serogroup A / serotype 4A (strain DSM 15465 / Z2491).